Here is a 457-residue protein sequence, read N- to C-terminus: uncharacterized protein (457 aa).

The TRAM domain occupies 5-63 (PVEEGQKFPLTIRRMGINGEGIGYFKKAVVFVPGAITGEEVVVEAVKVRDRFTEAKLNK). [4Fe-4S] cluster contacts are provided by C76, C82, C85, and C166. Residues Q290, Y319, D340, and D388 each contribute to the S-adenosyl-L-methionine site. The Nucleophile role is filled by C415.

Belongs to the class I-like SAM-binding methyltransferase superfamily. RNA M5U methyltransferase family.

This is an uncharacterized protein from Listeria innocua serovar 6a (strain ATCC BAA-680 / CLIP 11262).